We begin with the raw amino-acid sequence, 1240 residues long: Phospholipid-transporting ATPase 6 (1240 aa).

At 1–75 the chain is on the cytoplasmic side; that stretch reads MARRRIRSRI…TTRYNLLTFL (75 aa). Residues 76–97 traverse the membrane as a helical segment; it reads PKCLYEQFHRVANFYFLVAAIL. Topologically, residues 98-101 are extracellular; sequence SVFP. Residues 102–124 form a helical membrane-spanning segment; that stretch reads LSPFNKWSMIAPLVFVVGLSMGK. Over 125-306 the chain is Cytoplasmic; the sequence is EALEDWRRFM…SRIEKRMDYI (182 aa). The chain crosses the membrane as a helical span at residues 307 to 328; that stretch reads IYTLFALLLTVSFISSLGFAVM. Residues 329 to 360 lie on the Extracellular side of the membrane; that stretch reads TKLLMAEWWYLRPDKPESLTNPTNPLYAWVVH. Residues 361 to 378 traverse the membrane as a helical segment; sequence LITALLLYGYLIPISLYV. The Cytoplasmic portion of the chain corresponds to 379–943; sequence SIEVVKVLQA…HGHWCYKRIA (565 aa). Asp426 (4-aspartylphosphate intermediate) is an active-site residue. Lys625 participates in a covalent cross-link: Glycyl lysine isopeptide (Lys-Gly) (interchain with G-Cter in ubiquitin). Mg(2+) is bound by residues Asp888 and Asp892. A helical transmembrane segment spans residues 944-963; it reads QMICYFFYKNITFGLTLFYF. Topologically, residues 964 to 977 are extracellular; sequence ECFTGFSGQSIYND. A helical transmembrane segment spans residues 978–997; the sequence is SYLLLFNVVLTSLPVISLGV. The Cytoplasmic segment spans residues 998-1027; it reads FEQDVPSDVCLQFPALYQQGPKNLFFDWYR. The chain crosses the membrane as a helical span at residues 1028-1050; sequence ILGWMGNGVYASIVIFTLNLGIF. At 1051–1063 the chain is on the extracellular side; sequence HVQSFRSDGQTAD. A helical membrane pass occupies residues 1064-1086; it reads MNAMGTAMFTCIIWAVNVQIALT. The Cytoplasmic segment spans residues 1087–1092; it reads MSHFTW. Residues 1093-1113 traverse the membrane as a helical segment; sequence IQHVMIWGSIGAWYVFLALYG. At 1114–1130 the chain is on the extracellular side; that stretch reads MLPVKLSGNIFHMLVEI. The helical transmembrane segment at 1131-1155 threads the bilayer; that stretch reads LAPAPIFWLTSLLVIAATTLPYLFH. The Cytoplasmic segment spans residues 1156 to 1240; the sequence is ISYQRSVNPL…SNDTPSSNSQ (85 aa).

The protein belongs to the cation transport ATPase (P-type) (TC 3.A.3) family. Type IV subfamily.

Its subcellular location is the cell membrane. The protein localises to the endomembrane system. It carries out the reaction ATP + H2O + phospholipidSide 1 = ADP + phosphate + phospholipidSide 2.. Functionally, involved in transport of phospholipids and in regulation of pollen plasma membrane lipid asymmetry. The sequence is that of Phospholipid-transporting ATPase 6 from Arabidopsis thaliana (Mouse-ear cress).